Consider the following 518-residue polypeptide: Serine/threonine-protein kinase UL13 (518 aa).

Disordered stretches follow at residues Met1–Ala22 and Ser39–Pro120. The segment covering Gly44 to Pro61 has biased composition (low complexity). A Protein kinase domain is found at Pro151 to Ser518. ATP contacts are provided by residues Gly157–Val165 and Lys176. The active-site Proton acceptor is the Asp277.

This sequence belongs to the protein kinase superfamily. Ser/Thr protein kinase family. In terms of processing, autophosphorylated.

It is found in the virion tegument. Its subcellular location is the host nucleus. It catalyses the reaction L-seryl-[protein] + ATP = O-phospho-L-seryl-[protein] + ADP + H(+). It carries out the reaction L-threonyl-[protein] + ATP = O-phospho-L-threonyl-[protein] + ADP + H(+). In terms of biological role, multifunctional serine/threonine kinase that plays a role in several processes including egress of virus particles from the nucleus, modulation of the actin cytoskeleton and regulation of viral and cellular gene expression. Regulates the nuclear localization of viral envelopment factors UL34 and UL31, by phosphorylating the US3 kinase, indicating a role in nuclear egress. Disrupts host nuclear lamins, including LMNA and LMNB1. Phosphorylates the viral Fc receptor composed of glycoproteins E (gE) and I (gI). Phosphorylation of glycoprotein E (gE) by UL13 alters its subcellular localization, from the host early endosome to the plasma membrane. Participates in the transcriptional regulation of cellular and viral mRNAs mainly by phosphorylating the viral transcriptional regulator ICP22. Additional substrates have been identified, including UL41, UL49 or host EF1D. This chain is Serine/threonine-protein kinase UL13, found in Homo sapiens (Human).